Reading from the N-terminus, the 173-residue chain is VQ motif-containing protein 31 (173 aa).

Residues 27–36 (FREIVQRLTG) carry the VQ motif. Threonine 46 carries the phosphothreonine modification. Disordered stretches follow at residues 76–105 (EIVK…TSPV) and 143–173 (LHPS…SGKP). The segment covering 86–105 (PTGTTPSSKSGNTNLLTSPV) has biased composition (polar residues). A phosphoserine mark is found at serine 92, serine 103, serine 146, and serine 149. Positions 154–165 (TEPELLTLFPLT) are enriched in low complexity. Threonine 165 bears the Phosphothreonine mark. 2 positions are modified to phosphoserine: serine 166 and serine 170.

Phosphorylated on serine and threonine residues by MPK6.

The protein localises to the nucleus. May modulate WRKY transcription factor activities. The polypeptide is VQ motif-containing protein 31 (Arabidopsis thaliana (Mouse-ear cress)).